The sequence spans 184 residues: Lipocalin-15 (184 aa).

A signal peptide spans 1–20; sequence MMSFLLGAILTLLWAPTAQA. C83 and C176 are joined by a disulfide.

It belongs to the calycin superfamily. Lipocalin family.

Its subcellular location is the secreted. This Homo sapiens (Human) protein is Lipocalin-15 (LCN15).